The primary structure comprises 310 residues: Putative type II methyltransferase M.MJ0563P (310 aa).

The SAM-dependent MTase C5-type domain occupies 1 to 310 (MNVIDLFSGC…AIAKEIKKQL (310 aa)). C77 is a catalytic residue.

The protein belongs to the class I-like SAM-binding methyltransferase superfamily. C5-methyltransferase family.

The catalysed reaction is a 2'-deoxycytidine in DNA + S-adenosyl-L-methionine = a 5-methyl-2'-deoxycytidine in DNA + S-adenosyl-L-homocysteine + H(+). Its function is as follows. A putative methylase that may protect DNA from cleavage by an unknown endonuclease. This Methanocaldococcus jannaschii (strain ATCC 43067 / DSM 2661 / JAL-1 / JCM 10045 / NBRC 100440) (Methanococcus jannaschii) protein is Putative type II methyltransferase M.MJ0563P.